The sequence spans 887 residues: MDNPSSPPPNTPSDAAERRDLRAAMTSPVGDFEPFENEDEILGDQTVRDEAEEEDGEELFGDNMENDYRPMPELDHYDPALLDDEDDFSEMSQGDRFAAESEMRRRDRAAGIHRDDRDLGFGQSDDEDDVGPRAKRRAGEKAAVGEVEDTEMVESIENLEDTKGHSTKEWVSMLGPRTEIANRFQSFLRTFVDERGAYTYRDRIRRMCEQNMSSFVVSYTDLANKEHVLAYFLPEAPFQMLEIFDKVAKDMVLSIFPTYERVTTEIHVRISELPLIEELRTFRKLHLNQLVRTLGVVTATTGVLPQLSVIKYDCVKCGYVLGPFVQSQNTEIKPGSCPECQSTGPFSINMEQTLYRNYQKITLQESPGRIPAGRIPRSKDVILLADLCDQCKPGDELEVTGIYTNNYDGSLNTDQGFPVFATVIIANHVVVKDSKQVVQSLTDEDIATIQKLSKDPRIVERVVASMAPSIYGHDYIKRALALALFGGESKNPGEKHKVRGDINLLICGDPGTAKSQFLKYTEKVAPRAVFTTGQGASAVGLTAYVRRNPVSREWTLEAGALVLADQGVCLIDEFDKMNDQDRTSIHEAMEQQSISISKAGIVTSLQARCTVIAAANPIGGRYDPSMTFSENVNLSEPILSRFDVLCVVKDEFDPMQDQQLAKFVVHSHMKHHPSEEEQPELEEPQLKTVDEIPQDLLRQYIVYAKENIRPKLTNIDEDKIAKMYAQLRQESFATGSLPITVRHIESVIRMSEAHARMHLRENVMEADVSMAIRMMLESFIEAQKFSVMKKMRSTFQKYLSFQKDHSELLFFILRQLTLDQLAYIRCKDGPGATHVEIMERDLIERAKQLDIVNLKPFYESDLFRTNGFSYDPKRRIILQIVVDGNTA.

The segment covering 1–11 (MDNPSSPPPNT) has biased composition (pro residues). The disordered stretch occupies residues 1–150 (MDNPSSPPPN…KAAVGEVEDT (150 aa)). Thr26 bears the Phosphothreonine mark. The residue at position 27 (Ser27) is a Phosphoserine. Acidic residues-rich tracts occupy residues 33–42 (EPFENEDEIL) and 50–60 (EAEEEDGEELF). A compositionally biased stretch (basic and acidic residues) spans 66–78 (NDYRPMPELDHYD). Ser89 and Ser92 each carry phosphoserine. Residues 97–119 (FAAESEMRRRDRAAGIHRDDRDL) are compositionally biased toward basic and acidic residues. Phosphoserine is present on Ser124. The segment at 314–340 (CVKCGYVLGPFVQSQNTEIKPGSCPEC) adopts a C4-type zinc-finger fold. An MCM domain is found at 458–665 (IVERVVASMA…QDQQLAKFVV (208 aa)). ADP-binding residues include Ser515 and Gln516. Residues 640 to 643 (SRFD) carry the Arginine finger motif.

The protein belongs to the MCM family. Component of the Mcm2-7 complex. The complex forms a toroidal hexameric ring with the proposed subunit order Mcm2-Mcm6-Mcm4-Mcm7-Mcm3-Mcm5. Interacts with Mcm10. Phosphorylated by the catalytic component of the Dbf4-dependent kinase (DDK) complex Cdc7.

It localises to the nucleus. The protein resides in the chromosome. The catalysed reaction is ATP + H2O = ADP + phosphate + H(+). In terms of biological role, acts as a component of the MCM2-7 complex (MCM complex) which is the replicative helicase essential for 'once per cell cycle' DNA replication initiation and elongation in eukaryotic cells. Core component of CDC45-MCM-GINS (CMG) helicase, the molecular machine that unwinds template DNA during replication, and around which the replisome is built. The active ATPase sites in the MCM2-7 ring are formed through the interaction surfaces of two neighboring subunits such that a critical structure of a conserved arginine finger motif is provided in trans relative to the ATP-binding site of the Walker A box of the adjacent subunit. The six ATPase active sites, however, are likely to contribute differentially to the complex helicase activity. Required for the entry in S phase and for cell division. The polypeptide is DNA replication licensing factor Mcm2 (Mcm2) (Drosophila melanogaster (Fruit fly)).